Here is a 315-residue protein sequence, read N- to C-terminus: Homoserine O-succinyltransferase (315 aa).

Cys-142 (acyl-thioester intermediate) is an active-site residue. 2 residues coordinate substrate: Lys-163 and Ser-192. His-235 (proton acceptor) is an active-site residue. Glu-237 is a catalytic residue. Arg-249 serves as a coordination point for substrate.

The protein belongs to the MetA family.

The protein resides in the cytoplasm. The catalysed reaction is L-homoserine + succinyl-CoA = O-succinyl-L-homoserine + CoA. It participates in amino-acid biosynthesis; L-methionine biosynthesis via de novo pathway; O-succinyl-L-homoserine from L-homoserine: step 1/1. Transfers a succinyl group from succinyl-CoA to L-homoserine, forming succinyl-L-homoserine. The chain is Homoserine O-succinyltransferase from Tolumonas auensis (strain DSM 9187 / NBRC 110442 / TA 4).